The following is a 214-amino-acid chain: MKDLSNYRKSYEKSELLETNIPEDPITLFKKWFHEVEDFGGIEEVNAMTVSSIGLDGFPKARVVLLKQFTYEGFIFYTNYDSEKGRAIANNPNICLSFFWHSLERQIIIKGKVKKIAENLSDGYFESRPNGSKLGAIVSNQSEVIASRMILEEKLKQLEDNCVGKEILRPKNWGGYIVEPQEVEFWQGRPNRLHDRIRYKLSADFYWKIERLAP.

Substrate is bound by residues arginine 8–tyrosine 11 and lysine 67. Residues arginine 62–lysine 67, tyrosine 77–threonine 78, lysine 84, and glutamine 106 each bind FMN. Tyrosine 124, arginine 128, and serine 132 together coordinate substrate. Residues glutamine 141–serine 142 and tryptophan 186 each bind FMN. Substrate is bound at residue arginine 192–histidine 194. Residue arginine 196 participates in FMN binding.

It belongs to the pyridoxamine 5'-phosphate oxidase family. Homodimer. The cofactor is FMN.

The catalysed reaction is pyridoxamine 5'-phosphate + O2 + H2O = pyridoxal 5'-phosphate + H2O2 + NH4(+). It carries out the reaction pyridoxine 5'-phosphate + O2 = pyridoxal 5'-phosphate + H2O2. It functions in the pathway cofactor metabolism; pyridoxal 5'-phosphate salvage; pyridoxal 5'-phosphate from pyridoxamine 5'-phosphate: step 1/1. The protein operates within cofactor metabolism; pyridoxal 5'-phosphate salvage; pyridoxal 5'-phosphate from pyridoxine 5'-phosphate: step 1/1. Functionally, catalyzes the oxidation of either pyridoxine 5'-phosphate (PNP) or pyridoxamine 5'-phosphate (PMP) into pyridoxal 5'-phosphate (PLP). The chain is Pyridoxine/pyridoxamine 5'-phosphate oxidase from Flavobacterium psychrophilum (strain ATCC 49511 / DSM 21280 / CIP 103535 / JIP02/86).